Consider the following 79-residue polypeptide: Acyl carrier protein (79 aa).

One can recognise a Carrier domain in the interval 1–76 (MSLEDDVIAI…DVFTYIKKRQ (76 aa)). Position 36 is an O-(pantetheine 4'-phosphoryl)serine (Ser36).

Belongs to the acyl carrier protein (ACP) family. 4'-phosphopantetheine is transferred from CoA to a specific serine of apo-ACP by AcpS. This modification is essential for activity because fatty acids are bound in thioester linkage to the sulfhydryl of the prosthetic group.

Its subcellular location is the cytoplasm. It functions in the pathway lipid metabolism; fatty acid biosynthesis. In terms of biological role, carrier of the growing fatty acid chain in fatty acid biosynthesis. The protein is Acyl carrier protein of Chlamydia pneumoniae (Chlamydophila pneumoniae).